The primary structure comprises 459 residues: Flavin-containing monooxygenase FMO GS-OX1 (459 aa).

Residue 17-22 coordinates FAD; sequence GAGAAG. An NADP(+)-binding site is contributed by 211-216; it reads GNYASG.

The protein belongs to the FMO family. Requires FAD as cofactor. As to expression, mainly expressed in leaves. Low levels in flowers and seeds.

It catalyses the reaction a (Z)-omega-(methylsulfanyl)-N-sulfo-alkylhydroximate S-glucoside + NADPH + O2 + H(+) = a (Z)-omega-(methylsulfinyl)-alkyl-glucosinolate + NADP(+) + H2O. In terms of biological role, catalyzes the conversion of methylthioalkyl glucosinolates into methylsulfinylalkyl glucosinolates. Able to S-oxygenate both desulfo- and intact 4-methylthiobutyl glucosinolates, but no activity with methionine, dihomomethionine or 5-methylthiopentaldoxime. This is Flavin-containing monooxygenase FMO GS-OX1 (FMOGS-OX1) from Arabidopsis thaliana (Mouse-ear cress).